The chain runs to 278 residues: Protein irg-2 (278 aa).

Residues 152 to 179 are disordered; it reads NSIRGQPFKSLQPENRTPTQVTGHQQES. A compositionally biased stretch (polar residues) spans 163–179; the sequence is QPENRTPTQVTGHQQES.

Functionally, plays a role in innate immunity by conferring resistance to virulent strains of the Gram-negative bacterium P.aeruginosa via the zip-2 pathway and independent of the pmk-1 p38MAPK pathway. Induced as part of several immune responses to translational inhibition arising from endocytosis of ToxA during P.aeruginosa infection or exposure to exogenous cycloheximide. The chain is Protein irg-2 from Caenorhabditis elegans.